The chain runs to 458 residues: Chromosomal replication initiator protein DnaA (458 aa).

The domain I, interacts with DnaA modulators stretch occupies residues 1–84 (MENIWLEAQT…FHVAEEKPEA (84 aa)). The segment covering 80–119 (EKPEAAHEAKPEKEAKPAREKERDKDKEKEKDREKEKKEL) has biased composition (basic and acidic residues). Residues 80 to 120 (EKPEAAHEAKPEKEAKPAREKERDKDKEKEKDREKEKKELV) form a disordered region. The interval 84-121 (AAHEAKPEKEAKPAREKERDKDKEKEKDREKEKKELVP) is domain II. A domain III, AAA+ region region spans residues 122-338 (NLNPKYTFES…GMLIRLEAFA (217 aa)). ATP contacts are provided by Gly-166, Gly-168, Lys-169, and Thr-170. Positions 339–458 (SLTGQEITLS…VEDIRKKLFT (120 aa)) are domain IV, binds dsDNA.

Belongs to the DnaA family. Oligomerizes as a right-handed, spiral filament on DNA at oriC.

The protein localises to the cytoplasm. In terms of biological role, plays an essential role in the initiation and regulation of chromosomal replication. ATP-DnaA binds to the origin of replication (oriC) to initiate formation of the DNA replication initiation complex once per cell cycle. Binds the DnaA box (a 9 base pair repeat at the origin) and separates the double-stranded (ds)DNA. Forms a right-handed helical filament on oriC DNA; dsDNA binds to the exterior of the filament while single-stranded (ss)DNA is stabiized in the filament's interior. The ATP-DnaA-oriC complex binds and stabilizes one strand of the AT-rich DNA unwinding element (DUE), permitting loading of DNA polymerase. After initiation quickly degrades to an ADP-DnaA complex that is not apt for DNA replication. Binds acidic phospholipids. This is Chromosomal replication initiator protein DnaA from Citrifermentans bemidjiense (strain ATCC BAA-1014 / DSM 16622 / JCM 12645 / Bem) (Geobacter bemidjiensis).